A 171-amino-acid polypeptide reads, in one-letter code: Cyclin-dependent kinase inhibitor 2A (171 aa).

Positions 33 to 42 (ASMHTKHESE) are enriched in basic and acidic residues. A disordered region spans residues 33-52 (ASMHTKHESEESFSGEKLTE). ANK repeat units follow at residues 45–74 (FSGE…NPNA), 78–106 (FGRS…EPNT), and 111–140 (TLTL…RLDV).

Belongs to the CDKN2 cyclin-dependent kinase inhibitor family. Heterodimer with CDK4 or CDK6. Predominamt P16 complexes contained CDK6. Interacts with CDK4 (both 'T-172'-phosphorylated and non-phosphorylated forms); the interaction inhibits cyclin D-CDK4 kinase activity. Interacts with ISCO2. As to expression, expressed predominantly in lung and testis. In the testis, restricted to germ cells in the seminiferous epithelium. Not detected in premeiotic spermatogonia but high levels found in postmeiotic spermatids. In primary tumors, low levels detected in melanocytic hyperplasias. Higher levels found in non-metastatic and metastatic melanomas.

It is found in the cytoplasm. Its subcellular location is the nucleus. In terms of biological role, acts as a negative regulator of the proliferation of normal cells by interacting strongly with CDK4 and CDK6. This inhibits their ability to interact with cyclins D and to phosphorylate the retinoblastoma protein. The protein is Cyclin-dependent kinase inhibitor 2A of Monodelphis domestica (Gray short-tailed opossum).